Reading from the N-terminus, the 281-residue chain is LIM domain-containing protein G (281 aa).

3 LIM zinc-binding domains span residues 40–101 (LNCS…IKFN), 141–205 (DICT…SKQV), and 206–262 (NCFA…FTQP).

The sequence is that of LIM domain-containing protein G (limG) from Dictyostelium discoideum (Social amoeba).